Reading from the N-terminus, the 373-residue chain is MNYQLITTDAGLQQVCDQAKKHAQIALDTEFVRTRTYYPQLGLIQLYDGEQLSLIDPLPIKQWQPFIELLSNTQVVKFLHAGSEDLEVFLNAFKTLPTPMVDTQILAAFTGRPMSCGFATLVAEYMEVELDKSEARTDWLARPLTEKQCVYAAADVFYLLPMAKRLVQETEEAGWTAAASNECLLLCQRRSETLAPELAYREITNAWQLRPRQLGCLQKLAEWRLRQARERDLAVNFVVREENLWQVARHMPTSLGELDSLGLSGPEIRYHGKTLVALVAEAAELEESALPEPLPNLIDQPGYKKVFKEIKAAIVIASEQSGLSSELLASRRQINQLLNWHWKLKVGDNLPELVSGWRGDLLAAPLQDILKGY.

Positions 3–171 (YQLITTDAGL…MAKRLVQETE (169 aa)) constitute a 3'-5' exonuclease domain. An HRDC domain is found at 210 to 289 (RPRQLGCLQK…AEAAELEESA (80 aa)).

It belongs to the RNase D family. It depends on a divalent metal cation as a cofactor.

Its subcellular location is the cytoplasm. It carries out the reaction Exonucleolytic cleavage that removes extra residues from the 3'-terminus of tRNA to produce 5'-mononucleotides.. Its function is as follows. Exonuclease involved in the 3' processing of various precursor tRNAs. Initiates hydrolysis at the 3'-terminus of an RNA molecule and releases 5'-mononucleotides. This is Ribonuclease D from Serratia proteamaculans (strain 568).